The following is a 568-amino-acid chain: Chaperonin homolog Hsp-60, mitochondrial (568 aa).

The protein belongs to the chaperonin (HSP60) family.

Its subcellular location is the mitochondrion matrix. Its function is as follows. Implicated in mitochondrial protein import and macromolecular assembly. May facilitate the correct folding of imported proteins. May also prevent misfolding and promote the refolding and proper assembly of unfolded polypeptides generated under stress conditions in the mitochondrial matrix. The protein is Chaperonin homolog Hsp-60, mitochondrial (hsp-60) of Caenorhabditis elegans.